A 1726-amino-acid polypeptide reads, in one-letter code: MSDFIESEAEESEEEFEEKDLKPKKTQRFMEEDEEEEEENTEDQDEHGNLRGLIDDDDVEEEEEEERGEPPAGEDSDSGEEVRHRRRKRSFDDYLDDDDLDLIEENLGVKVKRRKKKYSRVKTMDDEGDDDDEKDLIADEIFTGDGDGEGEVEDGEAVDTLHPRDDEEEEDDEESDIDDFIVDDDGQPITKKKGKKFSGYTDAALQEAQEIFGGDFDFAEFDTEAYDHAEEEEEDQDDESWDRPKKQTKRRVSRRSIFEIYEPSELESSHMTDQDNEIRSTDMPERFQLRAIPVKPAEDDELEEEAEWIYRNAFSTPTISMQESTDYLDRGTTTNFSRKGPSTIAKIKEALNFMRNQHFEVPFIAFYRKEYVEPELNINDLWKVWQWDEKWTQLKTRKQNLTRLFQRMQSYQFEQISADPDKPLADSTRPLDTADMERLKDVQSIDELGDVYNHFLLYYGRDIPKMQNAAKGGKKKLKKIKEVSEEDGEEAEVEEEEEEEEQKGPDLKQASRRDMYSICQSAGLDGLAKKFGLTPEQFGENLRDSYQRHETEQFPAEPLELAKDYVCSQFNTPEAVLEGARYMVAMQIAREPLVRHVLRQTFQERAKINIKPTKKGKKDVDEAHFAYSFKYLKNKPVKELSGDQFLKMCLAEEEGLLAIDICIDLVGVKGYGDQTYFDEIKQFYYRDEFSHQVQEWNKQRTLAIERSLQQFLYPQMAKELKNKLIAEAKDNIVKSCCKKLYNWLKVAPYRPDQQVEEDDDLMDESQGKGIRVLGVAFASGRDTPVFCSLINGEGEVVDFLRLPYFLKRRNAWREDEREKKQQDVENLKKFLLSKKPHVVAVSGENRDAHMVMEDIKRTISELEQNSSLPVVGVELVDNELAVLYMNSKKSEADFRDYPPLLRQAVSVARKIQDPLVEFAQVCSTDDDILCLKLHPLQEHVVKEELLSALYCEFINRVNEVGVDVNRAIAHPYTQSLVQYICGLGPRKGSHLLKILKQNNTRLENRTQLVTMCHMGPKVFINCAGFIKIDTASLGDSTDSYIEVLDGSRVHPETYEWARKMAVDALEYDESAEDANPAGALEEILENPERLKDLDLDAFAEELERQGYGNKGITLYDIRAELSCRYKDLRAPYRPPNTEEVFNMLTKETPETFYIGKLITCVVTNIAHRRPQGESYDQAIRNDETGLWQCPFCQQDNFPELSEVWNHFDSGSCPGQAIGVRTRLDNAVMGFIPTKFLSDKVVKHPEERVKPGMTVHCRIMKIDIEKFNVDLTCRTSDLSDKNNEWKLPKDTYYDFDAETDDVKQEEEQKKKQQRTTYIKRVIAHPSFHNINFKQAEKMMESMDQGDVVIRPSSKGENHLTVTWKVADGIYQHVDVREEGKENAFSLGHTLWINTEEFEDLDEITARYVQPMAAFARDLLGHKYFHECNGGDRKKMEELLVRTKKEKPTFIPYYISACRDLPGKFLLGYQPRGKPRIEYVTITPDGFRYRSQIFPTVNGLFRWFKDHYQDPVPGVTPASSRTRTPASVNATPANINIADLTRAVNSLPRNMTSQMFNAIAAVTGQGQNPNTTPAQWASSQYGYSGGSSAGGGGGSSSAYHVFATPQQPMATPLMTPSYSYTTPGQQQAMTTPQYPSSTPQSSHGHHQHSSSTPSSSSSRVRTPQPKASSHTAVDWGKMAEQWLQEKEAERRKQKTPRMTPRPSPSPMIESTPMSIAGDATPLLDEMDR.

3 stretches are compositionally biased toward acidic residues: residues 1 to 18 (MSDF…EFEE), 31 to 45 (EEDE…EDQD), and 55 to 79 (DDDD…SDSG). Disordered stretches follow at residues 1-196 (MSDF…KGKK), 219-248 (AEFD…KKQT), and 482-512 (EVSE…QASR). Position 90 is a phosphoserine (S90). Residues 93–104 (DYLDDDDLDLIE) are compositionally biased toward acidic residues. The segment covering 110 to 120 (KVKRRKKKYSR) has biased composition (basic residues). 4 stretches are compositionally biased toward acidic residues: residues 146-157 (GDGEGEVEDGEA), 166-186 (DEEE…DDDG), 219-240 (AEFD…DDES), and 484-501 (SEED…EEEE). The span at 502 to 512 (QKGPDLKQASR) shows a compositional bias: basic and acidic residues. Residues 806–865 (LKRRNAWREDEREKKQQDVENLKKFLLSKKPHVVAVSGENRDAHMVMEDIKRTISELEQN) are a coiled coil. An S1 motif domain is found at 1204–1273 (WNHFDSGSCP…EKFNVDLTCR (70 aa)). An SH2 domain is found at 1316 to 1426 (YIKRVIAHPS…LLGHKYFHEC (111 aa)). Residue T1522 is modified to Phosphothreonine. S1525 carries the post-translational modification Phosphoserine. Residues 1611-1627 (LMTPSYSYTTPGQQQAM) are compositionally biased toward polar residues. The interval 1611–1726 (LMTPSYSYTT…ATPLLDEMDR (116 aa)) is disordered. Low complexity-rich tracts occupy residues 1628-1640 (TTPQ…PQSS) and 1647-1656 (SSSTPSSSSS). The segment covering 1657–1669 (RVRTPQPKASSHT) has biased composition (polar residues).

This sequence belongs to the SPT6 family.

It is found in the nucleus. In terms of biological role, histone H3-H4 chaperone that plays a role in maintenance of chromatin structure during RNA polymerase II transcription elongation. Promotes the activation of the myogenic gene program by entailing erasure of the repressive H3K27me3 epigenetic mark through stabilization of the chromatin interaction of the H3K27 demethylase KDM6A. Plays an important role during early patterning and somitogenesis of the embryo. The sequence is that of Transcription elongation factor SPT6 (supt6h) from Danio rerio (Zebrafish).